Consider the following 839-residue polypeptide: Nucleoporin NIC96 (839 aa).

Residues 25–60 (LLESSDNLPSASSELGSIQVSINELRRRVFQLRSKN) are leucine zipper-like heptad repeat, required for interaction with NSP1.

The protein belongs to the nucleoporin interacting component (NIC) family. As to quaternary structure, component of the nuclear pore complex (NPC). NPC constitutes the exclusive means of nucleocytoplasmic transport. NPCs allow the passive diffusion of ions and small molecules and the active, nuclear transport receptor-mediated bidirectional transport of macromolecules such as proteins, RNAs, ribonucleoparticles (RNPs), and ribosomal subunits across the nuclear envelope. Due to its 8-fold rotational symmetry, all subunits are present with 8 copies or multiples thereof. NIC96 is part of three NPC subcomplexes, interacting with NSP1 of the NUP57 subcomplex (NIC96, NSP1, NUP49, NUP57), with NUP120 of the NUP84 subcomplex (SEH1, NUP85, NUP120, NUP145C, SEC13, NUP84, NUP133), and with NUP53 of the NUP53-NUP59-NUP170 subcomplex. The interaction with NUP53 is cell cycle dependent. NIC96 is also associated with the distal ring of the nuclear basket and interacts here with MLP2, which forms together with MLP1 nuclear pore-attached intranuclear filaments.

The protein resides in the nucleus. Its subcellular location is the nuclear pore complex. It localises to the nucleus membrane. Functions as a component of the nuclear pore complex (NPC). NPC components, collectively referred to as nucleoporins (NUPs), can play the role of both NPC structural components and of docking or interaction partners for transiently associated nuclear transport factors. NIC96, which is localized to the core of the NPC and the distal ring of the nuclear basket, is required for de novo assembly of NPCs. It is involved in nuclear GSP1 import. This is Nucleoporin NIC96 (NIC96) from Saccharomyces cerevisiae (strain ATCC 204508 / S288c) (Baker's yeast).